The following is a 458-amino-acid chain: UDP-N-acetylglucosamine 1-carboxyvinyltransferase (458 aa).

A phosphoenolpyruvate-binding site is contributed by 34 to 35 (KN). Residue arginine 104 participates in UDP-N-acetyl-alpha-D-glucosamine binding. Residue cysteine 128 is the Proton donor of the active site. A 2-(S-cysteinyl)pyruvic acid O-phosphothioketal modification is found at cysteine 128. Residues aspartate 320 and valine 342 each coordinate UDP-N-acetyl-alpha-D-glucosamine.

This sequence belongs to the EPSP synthase family. MurA subfamily.

Its subcellular location is the cytoplasm. The enzyme catalyses phosphoenolpyruvate + UDP-N-acetyl-alpha-D-glucosamine = UDP-N-acetyl-3-O-(1-carboxyvinyl)-alpha-D-glucosamine + phosphate. Its pathway is cell wall biogenesis; peptidoglycan biosynthesis. Functionally, cell wall formation. Adds enolpyruvyl to UDP-N-acetylglucosamine. This Prochlorococcus marinus (strain NATL2A) protein is UDP-N-acetylglucosamine 1-carboxyvinyltransferase.